Here is a 458-residue protein sequence, read N- to C-terminus: tRNA modification GTPase MnmE (458 aa).

3 residues coordinate (6S)-5-formyl-5,6,7,8-tetrahydrofolate: arginine 30, glutamate 90, and lysine 129. One can recognise a TrmE-type G domain in the interval 225 to 379; that stretch reads GLSICLIGCP…LHQTIDTIIW (155 aa). Asparagine 235 is a binding site for K(+). Residues 235–240, 254–260, and 279–282 contribute to the GTP site; these read NVGKSS, SPIPGTT, and DTAG. Serine 239 lines the Mg(2+) pocket. Residues serine 254, isoleucine 256, and threonine 259 each coordinate K(+). Residue threonine 260 participates in Mg(2+) binding. Lysine 458 lines the (6S)-5-formyl-5,6,7,8-tetrahydrofolate pocket.

The protein belongs to the TRAFAC class TrmE-Era-EngA-EngB-Septin-like GTPase superfamily. TrmE GTPase family. In terms of assembly, homodimer. Heterotetramer of two MnmE and two MnmG subunits. K(+) serves as cofactor.

The protein resides in the cytoplasm. Its function is as follows. Exhibits a very high intrinsic GTPase hydrolysis rate. Involved in the addition of a carboxymethylaminomethyl (cmnm) group at the wobble position (U34) of certain tRNAs, forming tRNA-cmnm(5)s(2)U34. This is tRNA modification GTPase MnmE from Protochlamydia amoebophila (strain UWE25).